The primary structure comprises 150 residues: MTRENKTLNITEIQELLPHRYPFLLVDRVTDFEEEKYLHAIKNVSVNEPQFTGHFPQMPIFPGVLILEAMAQATGLLAFKSFGAPAENELYYFASIDKAKFRKPVVPGDQLVLEVEFIKDRRGIALFNGVAKVDGEVVCSAELKCARREF.

The active site involves H54.

Belongs to the thioester dehydratase family. FabZ subfamily.

The protein localises to the cytoplasm. The catalysed reaction is a (3R)-hydroxyacyl-[ACP] = a (2E)-enoyl-[ACP] + H2O. Its function is as follows. Involved in unsaturated fatty acids biosynthesis. Catalyzes the dehydration of short chain beta-hydroxyacyl-ACPs and long chain saturated and unsaturated beta-hydroxyacyl-ACPs. The chain is 3-hydroxyacyl-[acyl-carrier-protein] dehydratase FabZ from Aliivibrio fischeri (strain ATCC 700601 / ES114) (Vibrio fischeri).